The sequence spans 1017 residues: EMILIN-1 (1017 aa).

An N-terminal signal peptide occupies residues 1–21; that stretch reads MAPRALWSCYLCCLLTIATEA. Residues 56-133 form the EMI domain; that stretch reads HRNWCAYVVT…QGYGGDDCGE (78 aa). Disulfide bonds link Cys-60/Cys-123, Cys-87/Cys-94, and Cys-122/Cys-131. Disordered regions lie at residues 134-180 and 259-289; these read GPAS…SEKV and ELGH…GPSE. The span at 154–167 shows a compositional bias: low complexity; sequence RPNLSGSSAGSHLS. Asn-156 carries N-linked (GlcNAc...) asparagine glycosylation. Coiled coils occupy residues 171 to 211, 237 to 266, and 310 to 374; these read GEGP…LAED, ETLS…LNNH, and LDGF…DVVT. The interval 383 to 403 is disordered; sequence RRGSELGGAAGQGGHPPGYTS. The segment covering 387 to 398 has biased composition (gly residues); the sequence is ELGGAAGQGGHP. Residues Asn-416, Asn-456, Asn-562, and Asn-659 are each glycosylated (N-linked (GlcNAc...) asparagine). Residues 519-573 are a coiled coil; that stretch reads LHEAEAAGEAQQAVLEGLQGLLSRLRERMDAQEETAAEILLRLNLTAAQLSQLEG. Positions 676–697 form a coiled coil; sequence LADLGATKDSIISEINRLQQEA. Residues Asn-767 and Asn-795 are each glycosylated (N-linked (GlcNAc...) asparagine). A coiled-coil region spans residues 789 to 809; the sequence is RRLGALNNSLLLLEDRLQQLS. Residues 811–820 are compositionally biased toward low complexity; the sequence is KDFTGPSGKA. Positions 811–866 are disordered; that stretch reads KDFTGPSGKAGPPGPPGLQGPSGPAGPPGPPGKDGQQGAIGPPGPQGEQGAEGAPA. The region spanning 815–865 is the Collagen-like domain; the sequence is GPSGKAGPPGPPGLQGPSGPAGPPGPPGKDGQQGAIGPPGPQGEQGAEGAP. Over residues 822-841 the composition is skewed to pro residues; that stretch reads PPGPPGLQGPSGPAGPPGPP. Residues 843–866 show a composition bias toward low complexity; that stretch reads KDGQQGAIGPPGPQGEQGAEGAPA. The 148-residue stretch at 867–1014 folds into the C1q domain; it reads APVPRVAFSA…GALLYEDTEL (148 aa).

As to quaternary structure, homotrimer associated through a moderately stable interaction of the C-terminal globular C1q domains, allowing the nucleation of the triple helix and then a further quaternary assembly to higher-order polymers via intermolecular disulfide bonds. Interacts with EMILIN2. Interacts with EFEMP2; this interaction promotes the incorporation of EFEMP2 into the extracellular matrix.

Its subcellular location is the secreted. It localises to the extracellular space. It is found in the extracellular matrix. Functionally, involved in elastic and collagen fibers formation. It is required for EFEMP2 deposition into the extracellular matrix, and collagen network assembly and cross-linking via protein-lysine 6-oxidase/LOX activity. May be responsible for anchoring smooth muscle cells to elastic fibers, and may be involved the processes that regulate vessel assembly. Has cell adhesive capacity. May have a function in placenta formation and initial organogenesis and a later role in interstitial connective tissue. The sequence is that of EMILIN-1 (Emilin1) from Mus musculus (Mouse).